Here is a 195-residue protein sequence, read N- to C-terminus: NAD(P)H-quinone oxidoreductase subunit J, chloroplastic (195 aa).

It belongs to the complex I 30 kDa subunit family. As to quaternary structure, NDH is composed of at least 16 different subunits, 5 of which are encoded in the nucleus.

Its subcellular location is the plastid. It localises to the chloroplast thylakoid membrane. It carries out the reaction a plastoquinone + NADH + (n+1) H(+)(in) = a plastoquinol + NAD(+) + n H(+)(out). The catalysed reaction is a plastoquinone + NADPH + (n+1) H(+)(in) = a plastoquinol + NADP(+) + n H(+)(out). In terms of biological role, NDH shuttles electrons from NAD(P)H:plastoquinone, via FMN and iron-sulfur (Fe-S) centers, to quinones in the photosynthetic chain and possibly in a chloroplast respiratory chain. The immediate electron acceptor for the enzyme in this species is believed to be plastoquinone. Couples the redox reaction to proton translocation, and thus conserves the redox energy in a proton gradient. In Chlorokybus atmophyticus (Soil alga), this protein is NAD(P)H-quinone oxidoreductase subunit J, chloroplastic.